Reading from the N-terminus, the 224-residue chain is Urease accessory protein UreF (224 aa).

The protein belongs to the UreF family. UreD, UreF and UreG form a complex that acts as a GTP-hydrolysis-dependent molecular chaperone, activating the urease apoprotein by helping to assemble the nickel containing metallocenter of UreC. The UreE protein probably delivers the nickel.

The protein resides in the cytoplasm. In terms of biological role, required for maturation of urease via the functional incorporation of the urease nickel metallocenter. The chain is Urease accessory protein UreF from Klebsiella pneumoniae subsp. pneumoniae (strain ATCC 700721 / MGH 78578).